A 63-amino-acid polypeptide reads, in one-letter code: MISRFCLLFLLVFVVSKIQAAEDFNEENEVDDLDDLDFLDDLDLDLSPEELEYLENWVKEFED.

Residues 1–20 form the signal peptide; the sequence is MISRFCLLFLLVFVVSKIQA.

It belongs to the non-disulfide-bridged peptide (NDBP) superfamily. Long chain multifunctional peptide (group 2) family. In terms of tissue distribution, expressed by the venom gland.

It localises to the secreted. This chain is Anionic peptide NDBP7, found in Lychas mucronatus (Chinese swimming scorpion).